A 142-amino-acid polypeptide reads, in one-letter code: Mediator of RNA polymerase II transcription subunit 21 (142 aa).

Residues 87 to 131 (AEEQLSRIDSLQKKLIQVEGEKIEAIKRKESLTKDIEELINEFTE) adopt a coiled-coil conformation.

Belongs to the Mediator complex subunit 21 family. As to quaternary structure, component of the Mediator complex.

The protein localises to the nucleus. In terms of biological role, component of the Mediator complex, a coactivator involved in the regulated transcription of nearly all RNA polymerase II-dependent genes. Mediator functions as a bridge to convey information from gene-specific regulatory proteins to the basal RNA polymerase II transcription machinery. Mediator is recruited to promoters by direct interactions with regulatory proteins and serves as a scaffold for the assembly of a functional preinitiation complex with RNA polymerase II and the general transcription factors. The chain is Mediator of RNA polymerase II transcription subunit 21 (SRB7) from Eremothecium gossypii (strain ATCC 10895 / CBS 109.51 / FGSC 9923 / NRRL Y-1056) (Yeast).